Reading from the N-terminus, the 408-residue chain is Aminomethyltransferase, mitochondrial (408 aa).

The N-terminal 30 residues, 1–30 (MRGGLWQLGQSITRRLANGGDKKAVARRCF), are a transit peptide targeting the mitochondrion. Residues glutamate 235, arginine 266, and tyrosine 404 each contribute to the substrate site.

It belongs to the GcvT family. The glycine cleavage system is composed of four proteins: P, T, L and H.

The protein resides in the mitochondrion. It carries out the reaction N(6)-[(R)-S(8)-aminomethyldihydrolipoyl]-L-lysyl-[protein] + (6S)-5,6,7,8-tetrahydrofolate = N(6)-[(R)-dihydrolipoyl]-L-lysyl-[protein] + (6R)-5,10-methylene-5,6,7,8-tetrahydrofolate + NH4(+). In terms of biological role, the glycine cleavage system catalyzes the degradation of glycine. The polypeptide is Aminomethyltransferase, mitochondrial (GDCST) (Pisum sativum (Garden pea)).